A 299-amino-acid chain; its full sequence is Deoxyribonuclease-1-like 2 (299 aa).

The N-terminal stretch at 1 to 20 is a signal peptide; it reads MGGPRALLAALWALEAAGTA. Catalysis depends on residues glutamate 99 and histidine 170. Cysteine 209 and cysteine 245 are oxidised to a cystine.

Belongs to the DNase I family. Mg(2+) is required as a cofactor. Ca(2+) serves as cofactor. In terms of tissue distribution, preferentially expressed in the skin and up-regulated during keratinocytes differentiation. Highly abundant (at protein level) in the stratum granulosum.

Its subcellular location is the cytoplasm. The protein resides in the secreted. Its function is as follows. Divalent cation-dependent acid DNA endonuclease involved in the breakdown of the nucleus during corneocyte formation of epidermal keratinocytes. May play an immune role by eliminating harmful DNA released into the extracellular environment by damaged epidermal cells. The polypeptide is Deoxyribonuclease-1-like 2 (DNASE1L2) (Homo sapiens (Human)).